The following is a 367-amino-acid chain: Protein RecA (367 aa).

The span at 1–14 (MSTEVNANQSPNAE) shows a compositional bias: polar residues. The interval 1–24 (MSTEVNANQSPNAESRQEAARSGE) is disordered. Basic and acidic residues predominate over residues 15-24 (SRQEAARSGE). 84–91 (GPESSGKT) lines the ATP pocket. Residues 348 to 367 (GSEVSSNSMRPLTTANRKAA) are disordered. Polar residues predominate over residues 349 to 367 (SEVSSNSMRPLTTANRKAA).

The protein belongs to the RecA family.

The protein resides in the cytoplasm. Functionally, can catalyze the hydrolysis of ATP in the presence of single-stranded DNA, the ATP-dependent uptake of single-stranded DNA by duplex DNA, and the ATP-dependent hybridization of homologous single-stranded DNAs. It interacts with LexA causing its activation and leading to its autocatalytic cleavage. This chain is Protein RecA, found in Prochlorococcus marinus (strain MIT 9211).